The sequence spans 104 residues: Probable quinol monooxygenase YgiN (104 aa).

One can recognise an ABM domain in the interval 2-100 (LTVIAEIRTR…DVLEMNIRIL (99 aa)).

Homodimer.

The catalysed reaction is menadiol + 2 O2 = menadione + 2 superoxide + 2 H(+). In terms of biological role, can oxidize menadiol to menadione. The polypeptide is Probable quinol monooxygenase YgiN (ygiN) (Escherichia coli O157:H7).